Consider the following 364-residue polypeptide: Peptide chain release factor 2 (364 aa).

Glutamine 252 bears the N5-methylglutamine mark.

The protein belongs to the prokaryotic/mitochondrial release factor family. In terms of processing, methylated by PrmC. Methylation increases the termination efficiency of RF2.

The protein localises to the cytoplasm. Functionally, peptide chain release factor 2 directs the termination of translation in response to the peptide chain termination codons UGA and UAA. The chain is Peptide chain release factor 2 from Clostridium perfringens (strain SM101 / Type A).